Consider the following 355-residue polypeptide: F-box only protein 32 (355 aa).

The Nuclear localization signal motif lies at 62–67 (KKRKKD). Residues 169-173 (LLQTL) carry the Nuclear export signal motif. The region spanning 223–271 (LTFTDLPLCLQLNIMQRLSDGRDLVSLGQVAPDLHVLSEDRLLWKKLCQ) is the F-box domain. The Bipartite nuclear localization signal signature appears at 280–295 (RKRLILSDKGQLDWKK).

As to quaternary structure, part of the SCF (SKP1-CUL1-F-box) E3 ubiquitin-protein ligase complex SCF(FBXO32) formed of CUL1, SKP1, RBX1 and FBXO32.

It is found in the cytoplasm. The protein localises to the nucleus. The protein operates within protein modification; protein ubiquitination. Functionally, substrate recognition component of a SCF (SKP1-CUL1-F-box protein) E3 ubiquitin-protein ligase complex which mediates the ubiquitination and subsequent proteasomal degradation of target proteins. Probably recognizes and binds to phosphorylated target proteins during skeletal muscle atrophy. Recognizes TERF1. The sequence is that of F-box only protein 32 (FBXO32) from Sus scrofa (Pig).